A 362-amino-acid polypeptide reads, in one-letter code: Mortality factor 4-like protein 1 (362 aa).

One can recognise a Tudor-knot domain in the interval 12-51; that stretch reads QEGERVLCFHGPLLYEAKCVKVAIKDKQVKYFIHYSGWNK. The interaction with KAT8 stretch occupies residues 26–62; that stretch reads YEAKCVKVAIKDKQVKYFIHYSGWNKKSAVRPRRSEK. Residues 113 to 182 are disordered; the sequence is RELQKANQEQ…RKKRARVDPT (70 aa). Residues 133–266 form a sufficient for interaction with SIN3A region; sequence PGKKTSGLQQ…VAGIKEYFNV (134 aa). The Nuclear localization signal signature appears at 135-146; that stretch reads KKTSGLQQKNVE. K143 carries the post-translational modification N6-acetyllysine. Residues 164–230 form an interaction with RB1-1 region; sequence STSETPQPPR…FYLPAKKNVD (67 aa). The tract at residues 188-342 is sufficient for interaction with PHF12; the sequence is TFMNRVEVKV…FLKYLAKNSA (155 aa). The 172-residue stretch at 191–362 folds into the MRG domain; that stretch reads NRVEVKVKIP…APPEYHRKAV (172 aa). The segment at 323-344 is interaction with RB1-2; it reads LALLLNYLHDFLKYLAKNSATL.

Component of the NuA4 histone acetyltransferase complex which contains the catalytic subunit KAT5/TIP60 and the subunits EP400, TRRAP/PAF400, BRD8/SMAP, EPC1, DMAP1/DNMAP1, RUVBL1/TIP49, RUVBL2, ING3, actin, ACTL6A/BAF53A, MORF4L1/MRG15, MORF4L2/MRGX, MRGBP, YEATS4/GAS41, VPS72/YL1 and MEAF6. The NuA4 complex interacts with MYC and the adenovirus E1A protein. MORF4L1 may also participate in the formation of NuA4 related complexes which lack the KAT5/TIP60 catalytic subunit, but which include the SWI/SNF related protein SRCAP. Component of the mSin3A histone deacetylase complex, which includes SIN3A, HDAC2, ARID4B, MORF4L1, RBBP4/RbAp48, and RBBP7/RbAp46. May also interact with PHF12 and one or more as yet undefined members of the TLE (transducin-like enhancer of split) family of transcriptional repressors. Component of the SIN3B complex, which includes SIN3B, HDAC2 or HDAC1, PHF12 and MORF4L1. Interacts with RB1 and KAT8. Interacts with the N-terminus of MRFAP1. Found in a complex composed of MORF4L1, MRFAP1 and RB1. Interacts with the entire BRCA complex, which contains BRCA1, PALB2, BRCA2 and RAD51. Interacts with PALB2. Forms a complex with MSL1 and NUPR1.

Its subcellular location is the nucleus. Component of the NuA4 histone acetyltransferase (HAT) complex which is involved in transcriptional activation of select genes principally by acetylation of nucleosomal histones H4 and H2A. This modification may both alter nucleosome - DNA interactions and promote interaction of the modified histones with other proteins which positively regulate transcription. This complex may be required for the activation of transcriptional programs associated with oncogene and proto-oncogene mediated growth induction, tumor suppressor mediated growth arrest and replicative senescence, apoptosis, and DNA repair. The NuA4 complex ATPase and helicase activities seem to be, at least in part, contributed by the association of RUVBL1 and RUVBL2 with EP400. NuA4 may also play a direct role in DNA repair when directly recruited to sites of DNA damage. As part of the SIN3B complex represses transcription and counteracts the histone acetyltransferase activity of EP300 through the recognition H3K27ac marks by PHF12 and the activity of the histone deacetylase HDAC2. SIN3B complex is recruited downstream of the constitutively active genes transcriptional start sites through interaction with histones and mitigates histone acetylation and RNA polymerase II progression within transcribed regions contributing to the regulation of transcription. Required for homologous recombination repair (HRR) and resistance to mitomycin C (MMC). Involved in the localization of PALB2, BRCA2 and RAD51, but not BRCA1, to DNA-damage foci. This chain is Mortality factor 4-like protein 1, found in Homo sapiens (Human).